The primary structure comprises 304 residues: Virulence protein VirA (304 aa).

Its function is as follows. Could be involved in the biosynthesis of a major surface antigen important for virulence. This chain is Virulence protein VirA (virA), found in Vibrio anguillarum (strain ATCC 68554 / 775) (Listonella anguillarum).